Reading from the N-terminus, the 360-residue chain is Photosystem II protein D1 (360 aa).

Helical transmembrane passes span 29 to 46, 118 to 133, and 142 to 156; these read YIGWFGCLMFPTLLTATS, HFLLGVASYMGREWEL, and WIFVAFSAPVAAASA. His-118 provides a ligand contact to chlorophyll a. A pheophytin a-binding site is contributed by Tyr-126. The [CaMn4O5] cluster site is built by Asp-170 and Glu-189. A helical transmembrane segment spans residues 197-218; sequence FHMAGVAGVFGGSLFSAMHGSL. His-198 contacts chlorophyll a. Residues His-215 and 264–265 contribute to the a quinone site; that span reads SF. His-215 lines the Fe cation pocket. His-272 lines the Fe cation pocket. A helical transmembrane segment spans residues 274 to 288; it reads FLALWPVVGIWLTAM. 4 residues coordinate [CaMn4O5] cluster: His-332, Glu-333, Asp-342, and Ala-344. The propeptide occupies 345–360; sequence SGEVLPVALTAPAVNG.

The protein belongs to the reaction center PufL/M/PsbA/D family. In terms of assembly, PSII is composed of 1 copy each of membrane proteins PsbA, PsbB, PsbC, PsbD, PsbE, PsbF, PsbH, PsbI, PsbJ, PsbK, PsbL, PsbM, PsbT, PsbX, PsbY, PsbZ, Psb30/Ycf12, at least 3 peripheral proteins of the oxygen-evolving complex and a large number of cofactors. It forms dimeric complexes. The cofactor is The D1/D2 heterodimer binds P680, chlorophylls that are the primary electron donor of PSII, and subsequent electron acceptors. It shares a non-heme iron and each subunit binds pheophytin, quinone, additional chlorophylls, carotenoids and lipids. D1 provides most of the ligands for the Mn4-Ca-O5 cluster of the oxygen-evolving complex (OEC). There is also a Cl(-1) ion associated with D1 and D2, which is required for oxygen evolution. The PSII complex binds additional chlorophylls, carotenoids and specific lipids.. Post-translationally, tyr-161 forms a radical intermediate that is referred to as redox-active TyrZ, YZ or Y-Z. C-terminally processed by CTPA; processing is essential to allow assembly of the oxygen-evolving complex and thus photosynthetic growth.

Its subcellular location is the plastid. It is found in the chloroplast thylakoid membrane. The catalysed reaction is 2 a plastoquinone + 4 hnu + 2 H2O = 2 a plastoquinol + O2. In terms of biological role, photosystem II (PSII) is a light-driven water:plastoquinone oxidoreductase that uses light energy to abstract electrons from H(2)O, generating O(2) and a proton gradient subsequently used for ATP formation. It consists of a core antenna complex that captures photons, and an electron transfer chain that converts photonic excitation into a charge separation. The D1/D2 (PsbA/PsbD) reaction center heterodimer binds P680, the primary electron donor of PSII as well as several subsequent electron acceptors. The sequence is that of Photosystem II protein D1 from Phaeodactylum tricornutum (strain CCAP 1055/1).